A 211-amino-acid chain; its full sequence is C-type lectin domain-containing protein 158 (211 aa).

An N-terminal signal peptide occupies residues 1–16 (MQKFILSAFVVALVAA).

The polypeptide is C-type lectin domain-containing protein 158 (clec-158) (Caenorhabditis elegans).